Consider the following 363-residue polypeptide: MNTSSTVIKVTGESAANNYDVVVGRGLLGTLPEILGERVRRVLVIHPRALRLTGDTVRDDLESAGFTALTAEIPDAEEGKHIQVAAFCWQVLGQNDFTRSDAIVAVGGGAVTDLAGFVAATWLRGVKVIHMPTSLLGMVDASVGGKTGINTAEGKNLVGAFHPPAAVLADLDTLDTLPRNELISGMAEVVKCGFIADPAILELVEKDFAAVTDPRSETLRELIERAIAVKAKVVSEDLKESGLREILNYGHTLGHAIELVERYSWRHGAAVSVGMMFAAELARSVGRLSDADADRHRSILEGLGLPVTYRRDRWQGLLDGMRRDKKSRGDLLRFVVLDGVAKPGILDVPDTSLLFAAYQEVAS.

NAD(+) is bound by residues aspartate 75–lysine 80, glycine 109–aspartate 113, threonine 133–serine 134, lysine 146, lysine 155, and threonine 173–threonine 176. Zn(2+) contacts are provided by glutamate 188, histidine 251, and histidine 267.

The protein belongs to the sugar phosphate cyclases superfamily. Dehydroquinate synthase family. Co(2+) is required as a cofactor. The cofactor is Zn(2+). Requires NAD(+) as cofactor.

It is found in the cytoplasm. It catalyses the reaction 7-phospho-2-dehydro-3-deoxy-D-arabino-heptonate = 3-dehydroquinate + phosphate. The protein operates within metabolic intermediate biosynthesis; chorismate biosynthesis; chorismate from D-erythrose 4-phosphate and phosphoenolpyruvate: step 2/7. In terms of biological role, catalyzes the conversion of 3-deoxy-D-arabino-heptulosonate 7-phosphate (DAHP) to dehydroquinate (DHQ). In Pseudarthrobacter chlorophenolicus (strain ATCC 700700 / DSM 12829 / CIP 107037 / JCM 12360 / KCTC 9906 / NCIMB 13794 / A6) (Arthrobacter chlorophenolicus), this protein is 3-dehydroquinate synthase.